We begin with the raw amino-acid sequence, 1323 residues long: Clustered mitochondria protein homolog (1323 aa).

The TPR 1 repeat unit spans residues 103 to 141 (KEKPYNLAAIYDHLNKFREVIGLHFLDKYSSEVGVLSGV). The disordered stretch occupies residues 149 to 186 (LQDVKETEPETQDDKDKETDETKSTKEDSNQTEEKKSE). A compositionally biased stretch (basic and acidic residues) spans 150–186 (QDVKETEPETQDDKDKETDETKSTKEDSNQTEEKKSE). Residues 351–608 (FANQPDASRS…RATPLDIEFI (258 aa)) enclose the Clu domain. A TPR 2 repeat occupies 530-563 (CYGLSTDGSKIFSDSSFENVLKPIAEAFHLKPHP). Residues 764–801 (NEEEISKRKEESEKKATEGKDQDKEEEKANDNEKNKED) show a composition bias toward basic and acidic residues. The segment at 764–808 (NEEEISKRKEESEKKATEGKDQDKEEEKANDNEKNKEDDKEEVSN) is disordered. TPR repeat units lie at residues 1042 to 1076 (LSVY…KSEA), 1099 to 1132 (ITAY…WTLV), 1141 to 1174 (VNTY…STKL), and 1183 to 1216 (GMLR…FTKF). The tract at residues 1250-1323 (KALAQQASAS…KKSNNKKSKK (74 aa)) is disordered. A compositionally biased stretch (basic residues) spans 1308-1323 (PKKQLKKKSNNKKSKK).

The protein belongs to the CLU family. In terms of assembly, may associate with the eukaryotic translation initiation factor 3 (eIF-3) complex.

Its subcellular location is the cytoplasm. In terms of biological role, mRNA-binding protein involved in proper cytoplasmic distribution of mitochondria. This Debaryomyces hansenii (strain ATCC 36239 / CBS 767 / BCRC 21394 / JCM 1990 / NBRC 0083 / IGC 2968) (Yeast) protein is Clustered mitochondria protein homolog.